A 1243-amino-acid chain; its full sequence is MSGGGEQPDILSVGILVKERWKVLRKIGGGGFGEIYDALDMLTRENVALKVESAQQPKQVLKMEVAVLKKLQGKDHVCRFIGCGRNDRFNYVVMQLQGRNLADLRRSQSRGTFTISTTLRLGKQILESIESIHSVGFLHRDIKPSNFAMGRFPSTCRKCFMLDFGLARQFTNSCGDVRPPRAVAGFRGTVRYASINAHRNREMGRHDDLWSLFYMLVEFVVGQLPWRKIKDKEQVGSIKERYDHRLMLKHLPPEFSTFLDHISSLDYFTKPDYQLLTSVFDNSIKTFGVIESDPFDWEKSGTDGSLTTTTTSATPQLHTRLTPAAIGIANATPIPGDLLRENTDEVFPDEQLSDGENGIPVGVSPDKLPGSLGHPRPQEKDVWEEMDINKNKIKLGICKAATEEENSHGQVNGILNAPSLGSPIRVRSEITQPDRDVPLVRKLRSIHSFELEKRLTLEPKPDTDKFLETCMEKMQKDSSAGKEPVPPALPHKPCVPVVTHTDHIWHYDDEYLPDASKPASANTPEQADGGGSNGFIAVNLSSCKQEVDSKEWVIVDKEQDLQDFRTNEVLGHKTTGSPSDEEPEVLQVLEGSPQDEKIQVGPWTDNHHLKKESSGVVLALSAECPATAASELYTDRLDLQAGAASQFITVTPTSPMEAQAEGPLTAITIPRPSVASTQSTSGSFHYGPQPEKKDLQPLEPTVELYSPRENFSGLVVTEGELASGGSRVDLGLQIDHTGHDMLPNMRDGDTSQDLGPKDPPDHNRLAVKEFEHLPGETEERSLLLGSENEDERLSKGQHCIEVSSPGELVTAERAQLAATEPLHVSETQNCSVLPNQDKTHEIMKLLAVGTSEISPQAIDPHAEGQIGQMAAMQKNKLFKDDGIQSESLPRQQGDLSAFLHQEGKREKVVPRNGELYHCVSENEHGPPTRKDMLRSSFVTRHSRIPVLAQEIDSTFESSSAISAKEKLLQKKAYQPEIVKLLVEKRQFKSFLGDLSSASDKLIEEKLAAVPVPFSEEEVFAPFSRLAADSHLSRSVEDSFLSPIISQARKSKIPRPVSWVSTDQINGSASPQFLPRPPPGKPPVRPGVEARLRRYKVLGSSNSDSDLFSRLAQILQNGSQKSRSTTQCKSPGSPHNPKTPPKSPVVPRRSPSASPRSSSLPRTSSSSPSRAGRPHHDQRSSSPHLGRSKSPPSHSGSSSSRRSCQQEHCKPSKNGPKGSGSLHHHSTSSKTPPGKSKPASKLSR.

In terms of domain architecture, Protein kinase spans 21-284 (WKVLRKIGGG…LLTSVFDNSI (264 aa)). ATP contacts are provided by residues 27–35 (IGGGGFGEI) and Lys50. Asp141 acts as the Proton acceptor in catalysis. Ser445 bears the Phosphoserine mark. Polar residues predominate over residues 674–683 (VASTQSTSGS). 2 disordered regions span residues 674-695 (VASTQSTSGSFHYGPQPEKKDL) and 737-761 (TGHDMLPNMRDGDTSQDLGPKDPPD). Ser786 is modified (phosphoserine). The disordered stretch occupies residues 1063–1086 (QINGSASPQFLPRPPPGKPPVRPG). Over residues 1073–1084 (LPRPPPGKPPVR) the composition is skewed to pro residues. The residue at position 1102 (Ser1102) is a Phosphoserine. Polar residues predominate over residues 1115 to 1129 (QNGSQKSRSTTQCKS). Residues 1115–1243 (QNGSQKSRST…KSKPASKLSR (129 aa)) are disordered. 3 stretches are compositionally biased toward low complexity: residues 1144–1170 (VVPRRSPSASPRSSSLPRTSSSSPSRA), 1187–1202 (SKSPPSHSGSSSSRRS), and 1227–1243 (SSKTPPGKSKPASKLSR).

The protein belongs to the protein kinase superfamily. CK1 Ser/Thr protein kinase family. Interacts with CEP164. Interacts with MCRS1; the interaction is required for recruitment of TTBK2 to the mother centriole.

Its subcellular location is the cell projection. It is found in the cilium. It localises to the cytoplasm. The protein localises to the cytoskeleton. The protein resides in the cilium basal body. Its subcellular location is the microtubule organizing center. It is found in the centrosome. It localises to the centriole. The protein localises to the cytosol. The protein resides in the nucleus. It carries out the reaction L-seryl-[protein] + ATP = O-phospho-L-seryl-[protein] + ADP + H(+). The enzyme catalyses L-threonyl-[protein] + ATP = O-phospho-L-threonyl-[protein] + ADP + H(+). Functionally, serine/threonine kinase that acts as a key regulator of ciliogenesis: controls the initiation of ciliogenesis by binding to the distal end of the basal body and promoting the removal of CCP110, which caps the mother centriole, leading to the recruitment of IFT proteins, which build the ciliary axoneme. Has some substrate preference for proteins that are already phosphorylated on a Tyr residue at the +2 position relative to the phosphorylation site. Able to phosphorylate tau on serines in vitro. Phosphorylates MPHOSPH9 which promotes its ubiquitination and proteasomal degradation, loss of MPHOSPH9 facilitates the removal of the CP110-CEP97 complex (a negative regulator of ciliogenesis) from the mother centrioles, promoting the initiation of ciliogenesis. Required for recruitment of CPLANE2 and INTU to the mother centriole. In Mus musculus (Mouse), this protein is Tau-tubulin kinase 2 (Ttbk2).